The following is a 186-amino-acid chain: Putative manganese efflux pump MntP (186 aa).

The next 6 helical transmembrane spans lie at 1-21, 41-61, 71-91, 105-125, 130-150, and 165-185; these read MSFL…FAVS, VFFG…GSAV, WIAF…ALYG, LLML…SFAF, ILEP…CGAV, and IIGG…HLLW.

This sequence belongs to the MntP (TC 9.B.29) family.

It localises to the cell membrane. Its function is as follows. Probably functions as a manganese efflux pump. This chain is Putative manganese efflux pump MntP, found in Methanosarcina barkeri (strain Fusaro / DSM 804).